The following is a 320-amino-acid chain: Malate dehydrogenase (320 aa).

NAD(+)-binding positions include 10–15 and aspartate 34; that span reads GSGMIG. Arginine 83 and arginine 89 together coordinate substrate. NAD(+) is bound by residues asparagine 96 and 119 to 121; that span reads ITN. Substrate is bound by residues asparagine 121 and arginine 152. The active-site Proton acceptor is histidine 176.

Belongs to the LDH/MDH superfamily. MDH type 3 family.

It catalyses the reaction (S)-malate + NAD(+) = oxaloacetate + NADH + H(+). Functionally, catalyzes the reversible oxidation of malate to oxaloacetate. The protein is Malate dehydrogenase of Brucella suis (strain ATCC 23445 / NCTC 10510).